The sequence spans 503 residues: Cytochrome P450 monooxygenase lnbC (503 aa).

Residues V14–V34 traverse the membrane as a helical segment. Residues N94 and N169 are each glycosylated (N-linked (GlcNAc...) asparagine). Residue C446 participates in heme binding.

Belongs to the cytochrome P450 family. The cofactor is heme.

The protein localises to the membrane. It functions in the pathway secondary metabolite biosynthesis. Its function is as follows. Cytochrome P450 monooxygenase; part of the lnb gene cluster that mediates the biosynthesis of diastereomeric piperazines. Lna and lnb clusters encode sets of enzymes that produce overlapping sets of previously undescribed metabolites such as piperazinomycin-like metabolites or morpholine. The lna and lnb biosynthetic pathways appear to be part of a signaling network that controls the formation of sclerotia, a resilient overwintering structure. One primary function of the non-canonical nonribosomal peptide synthetases lnaA and lnbA consists in the reduction of L-tyrosine. The presence in the clusters of tailoring enzymes such as the oxidoreductases lnaB, lnbB, lnaE or lnbE, as well as of the cytochrome P450 monooxygenases lnaC, lnaD, or lnbC, might explain formation of various diastereomeric piperazines. This chain is Cytochrome P450 monooxygenase lnbC, found in Aspergillus flavus (strain ATCC 200026 / FGSC A1120 / IAM 13836 / NRRL 3357 / JCM 12722 / SRRC 167).